The sequence spans 529 residues: MSSTVSYWILNSTRNSIATLQGGRRLYSRYVSNRNKLKWRLFSRVPPTLNSSPCGGFTLCKAYRHTSTEEDDFHLQLSPEQINEVLRAGETTHKILDLESRVPNSVLRFESNQLAANSPVEDRRGVASCLQTNGLMFGIFDGHGGHACAQAVSERLFYYVAVSLMSHQTLEHMEGAMESMKPLLPILHWLKHPGDSIYKDVTSVHLDHLRVYWQELLDLHMEMGLSIEEALMYSFQRLDSDISLEIQAPLEDEVTRNLSLQVAFSGATACMAHVDGIHLHVANAGDCRAILGVQEDNGMWSCLPLTRDHNAWNQAELSRLKREHPESEDRTIIMEDRLLGVLIPCRAFGDVQLKWSKELQRSILERGFNTEALNIYQFTPPHYYTPPYLTAEPEVTYHRLRPQDKFLVLASDGLWDMLSNEDVVRLVVGHLAEADWHKTDLAQRPANLGLMQSLLLQRKASGLHEADQNAATRLIRHAIGNNEYGEMEAERLAAMLTLPEDLARMYRDDITVTVVYFNSESIGAYYKGG.

The N-terminal 66 residues, 1–66 (MSSTVSYWIL…FTLCKAYRHT (66 aa)), are a transit peptide targeting the mitochondrion. The PPM-type phosphatase domain maps to 106–517 (VLRFESNQLA…DDITVTVVYF (412 aa)). Positions 141, 142, 412, and 508 each coordinate Mn(2+).

It belongs to the PP2C family. Requires Mg(2+) as cofactor.

It localises to the mitochondrion. It carries out the reaction O-phospho-L-seryl-[pyruvate dehydrogenase E1 alpha subunit] + H2O = L-seryl-[pyruvate dehydrogenase E1 alpha subunit] + phosphate. In terms of biological role, mitochondrial enzyme that catalyzes the dephosphorylation and concomitant reactivation of the alpha subunit of the E1 component of the pyruvate dehydrogenase complex (PDC), thereby stimulating the conversion of pyruvate into acetyl-CoA. Acts as a crucial regulator of T cell metabolism and function, with a particular focus on T-helper Th17. This is [Pyruvate dehydrogenase [acetyl-transferring]]-phosphatase 2, mitochondrial from Homo sapiens (Human).